The following is a 290-amino-acid chain: UPF0761 membrane protein Ent638_4092 (290 aa).

The next 6 membrane-spanning stretches (helical) occupy residues 44 to 64, 104 to 124, 140 to 160, 183 to 203, 210 to 230, and 244 to 264; these read LLSL…FPMF, VGAC…DSAL, FAVY…SLAI, IFPL…VPTL, AIVG…GFAL, and VLAV…IVLL.

This sequence belongs to the UPF0761 family.

It is found in the cell inner membrane. The polypeptide is UPF0761 membrane protein Ent638_4092 (Enterobacter sp. (strain 638)).